The sequence spans 129 residues: Small ribosomal subunit protein uS11 (129 aa).

It belongs to the universal ribosomal protein uS11 family. Part of the 30S ribosomal subunit. Interacts with proteins S7 and S18. Binds to IF-3.

Its function is as follows. Located on the platform of the 30S subunit, it bridges several disparate RNA helices of the 16S rRNA. Forms part of the Shine-Dalgarno cleft in the 70S ribosome. The polypeptide is Small ribosomal subunit protein uS11 (Pseudomonas putida (strain GB-1)).